The primary structure comprises 280 residues: CAG pathogenicity island protein 12 (280 aa).

Residues 1–20 (MKLRASVLIGATILCLILSA) form the signal peptide. Cysteine 21 is lipidated: N-palmitoyl cysteine. The S-diacylglycerol cysteine moiety is linked to residue cysteine 21.

Its subcellular location is the cell membrane. This is CAG pathogenicity island protein 12 (cagT) from Helicobacter pylori (strain ATCC 700392 / 26695) (Campylobacter pylori).